A 469-amino-acid chain; its full sequence is Trigger factor (469 aa).

Positions 166-245 constitute a PPIase FKBP-type domain; sequence GDFLTIDITA…VKSVKERELP (80 aa). Residues 430–469 are disordered; that stretch reads GGEEEAAEAEAAPAVDSDAVEGEAATEEAAPSDDPAAVKF.

It belongs to the FKBP-type PPIase family. Tig subfamily.

The protein resides in the cytoplasm. It catalyses the reaction [protein]-peptidylproline (omega=180) = [protein]-peptidylproline (omega=0). In terms of biological role, involved in protein export. Acts as a chaperone by maintaining the newly synthesized protein in an open conformation. Functions as a peptidyl-prolyl cis-trans isomerase. The chain is Trigger factor from Arthrobacter sp. (strain FB24).